We begin with the raw amino-acid sequence, 198 residues long: UPF0301 protein BDI_1431 (198 aa).

Belongs to the UPF0301 (AlgH) family.

This chain is UPF0301 protein BDI_1431, found in Parabacteroides distasonis (strain ATCC 8503 / DSM 20701 / CIP 104284 / JCM 5825 / NCTC 11152).